The sequence spans 31 residues: Cytochrome b6-f complex subunit 6 (31 aa).

The chain crosses the membrane as a helical span at residues 3–23; it reads IITSYFGFLLTALTIASALFI.

The protein belongs to the PetL family. The 4 large subunits of the cytochrome b6-f complex are cytochrome b6, subunit IV (17 kDa polypeptide, PetD), cytochrome f and the Rieske protein, while the 4 small subunits are PetG, PetL, PetM and PetN. The complex functions as a dimer.

Its subcellular location is the plastid. It is found in the chloroplast thylakoid membrane. Its function is as follows. Component of the cytochrome b6-f complex, which mediates electron transfer between photosystem II (PSII) and photosystem I (PSI), cyclic electron flow around PSI, and state transitions. PetL is important for photoautotrophic growth as well as for electron transfer efficiency and stability of the cytochrome b6-f complex. In Helianthus annuus (Common sunflower), this protein is Cytochrome b6-f complex subunit 6.